A 92-amino-acid chain; its full sequence is Integration host factor subunit beta (92 aa).

This sequence belongs to the bacterial histone-like protein family. Heterodimer of an alpha and a beta chain.

Its function is as follows. This protein is one of the two subunits of integration host factor, a specific DNA-binding protein that functions in genetic recombination as well as in transcriptional and translational control. This chain is Integration host factor subunit beta, found in Vibrio cholerae serotype O1 (strain ATCC 39541 / Classical Ogawa 395 / O395).